An 85-amino-acid polypeptide reads, in one-letter code: uncharacterized protein (85 aa).

This sequence belongs to the YciI family.

This is an uncharacterized protein from Bacillus subtilis (strain 168).